Reading from the N-terminus, the 131-residue chain is Small ribosomal subunit protein uS8 (131 aa).

This sequence belongs to the universal ribosomal protein uS8 family. Part of the 30S ribosomal subunit. Contacts proteins S5 and S12.

Functionally, one of the primary rRNA binding proteins, it binds directly to 16S rRNA central domain where it helps coordinate assembly of the platform of the 30S subunit. The sequence is that of Small ribosomal subunit protein uS8 from Ruthia magnifica subsp. Calyptogena magnifica.